The chain runs to 293 residues: Ribonuclease HII (293 aa).

The RNase H type-2 domain occupies 81-271; that stretch reads THIAGVDEAG…VREALGLPTG (191 aa). The a divalent metal cation site is built by Asp-87, Glu-88, and Asp-180. The disordered stretch occupies residues 273–293; sequence PPSALQAELFPEAPSRTGVKS.

It belongs to the RNase HII family. Mn(2+) is required as a cofactor. Mg(2+) serves as cofactor.

It is found in the cytoplasm. It catalyses the reaction Endonucleolytic cleavage to 5'-phosphomonoester.. In terms of biological role, endonuclease that specifically degrades the RNA of RNA-DNA hybrids. The sequence is that of Ribonuclease HII from Myxococcus xanthus (strain DK1622).